Here is a 617-residue protein sequence, read N- to C-terminus: Ceramide transfer protein (617 aa).

Over residues 1 to 11 (MSDNQSWNSSG) the composition is skewed to polar residues. The segment at 1-23 (MSDNQSWNSSGSEEDLEPESGPP) is disordered. A PH domain is found at 23–117 (PVERCGVLSK…WIDSIEQHKS (95 aa)). Residues 268 to 302 (REDSWQKRLDKEIEKRRRVEEAYKNAMTELKKKSH) adopt a coiled-coil conformation. Residues 320–326 (EFFDAVE) carry the FFAT motif. Residues 341-382 (EKGRSHWPPSPPSSEAHTAAGSHRLVQAPPSCPPPTDLVSSS) form a disordered region. Residues 383–611 (DEHRFRIQVE…FTSYVQEKTA (229 aa)) form the START domain. Residues glutamate 466, glutamine 487, asparagine 524, and tyrosine 572 each coordinate an N-acylsphing-4-enine.

It localises to the cytoplasm. The protein resides in the golgi apparatus. It is found in the endoplasmic reticulum. It carries out the reaction N-hexadecanoylsphing-4-enine(in) = N-hexadecanoylsphing-4-enine(out). Functionally, may mediate the intracellular trafficking of ceramide in a non-vesicular manner. The chain is Ceramide transfer protein (cert1) from Xenopus laevis (African clawed frog).